Consider the following 105-residue polypeptide: Large ribosomal subunit protein uL24 (105 aa).

Belongs to the universal ribosomal protein uL24 family. As to quaternary structure, part of the 50S ribosomal subunit.

Its function is as follows. One of two assembly initiator proteins, it binds directly to the 5'-end of the 23S rRNA, where it nucleates assembly of the 50S subunit. In terms of biological role, one of the proteins that surrounds the polypeptide exit tunnel on the outside of the subunit. This is Large ribosomal subunit protein uL24 from Methylobacterium sp. (strain 4-46).